We begin with the raw amino-acid sequence, 89 residues long: Large ribosomal subunit protein uL29c (89 aa).

This sequence belongs to the universal ribosomal protein uL29 family.

The protein resides in the plastid. It is found in the chloroplast. This chain is Large ribosomal subunit protein uL29c (rpl29), found in Trieres chinensis (Marine centric diatom).